Consider the following 804-residue polypeptide: G-type lectin S-receptor-like serine/threonine-protein kinase At1g61500 (804 aa).

Positions 1–24 are cleaved as a signal peptide; it reads MMTRFACLHLFTMFLFTLLSGSSS. A Bulb-type lectin domain is found at 25 to 145; the sequence is AVITTESPLS…VSERALWQSF (121 aa). Over 25 to 427 the chain is Extracellular; that stretch reads AVITTESPLS…ELDGNKRKKT (403 aa). N-linked (GlcNAc...) asparagine glycosylation is found at Asn-54, Asn-135, and Asn-237. The EGF-like; atypical domain maps to 279–315; sequence PKKLCDFYGACGPFGLCVMSPSPMCKCFRGFVPKSVE. Cystine bridges form between Cys-283–Cys-295 and Cys-289–Cys-303. N-linked (GlcNAc...) asparagine glycosylation is found at Asn-321, Asn-337, and Asn-376. The 83-residue stretch at 334-416 folds into the PAN domain; sequence CLGNSTGEDA…GELLSIRLAR (83 aa). 2 disulfide bridges follow: Cys-369–Cys-390 and Cys-373–Cys-379. A helical transmembrane segment spans residues 428 to 448; that stretch reads IVASIVSLTLFMILGFTAFGV. At 449–804 the chain is on the cytoplasmic side; sequence WRCRVEHIAH…GMTQSVILGR (356 aa). The region spanning 491–776 is the Protein kinase domain; it reads FSLSNKLGQG…DLPSPKQPTF (286 aa). ATP contacts are provided by residues 497–505 and Lys-519; that span reads LGQGGFGSV. Phosphoserine occurs at positions 525 and 540. Positions 580–597 are caM-binding; the sequence is RKRLEIDWPKRFDIIQGI. The active-site Proton acceptor is the Asp-616. 2 positions are modified to phosphoserine: Ser-620 and Ser-633. Phosphothreonine is present on Thr-650. 2 positions are modified to phosphoserine: Ser-693 and Ser-787.

The protein belongs to the protein kinase superfamily. Ser/Thr protein kinase family.

Its subcellular location is the cell membrane. It catalyses the reaction L-seryl-[protein] + ATP = O-phospho-L-seryl-[protein] + ADP + H(+). The enzyme catalyses L-threonyl-[protein] + ATP = O-phospho-L-threonyl-[protein] + ADP + H(+). The sequence is that of G-type lectin S-receptor-like serine/threonine-protein kinase At1g61500 from Arabidopsis thaliana (Mouse-ear cress).